We begin with the raw amino-acid sequence, 541 residues long: Anthranilate synthase component 1 (541 aa).

L-tryptophan is bound by residues S61 and 311–313 (PYM). 348–349 (GT) is a binding site for chorismate. E381 lines the Mg(2+) pocket. Chorismate-binding positions include Y469, R489, 503 to 505 (GAG), and G505. E518 serves as a coordination point for Mg(2+).

Belongs to the anthranilate synthase component I family. Heterotetramer consisting of two non-identical subunits: a beta subunit (TrpG) and a large alpha subunit (TrpE). It depends on Mg(2+) as a cofactor.

It carries out the reaction chorismate + L-glutamine = anthranilate + pyruvate + L-glutamate + H(+). Its pathway is amino-acid biosynthesis; L-tryptophan biosynthesis; L-tryptophan from chorismate: step 1/5. Its activity is regulated as follows. Feedback inhibited by tryptophan. Functionally, part of a heterotetrameric complex that catalyzes the two-step biosynthesis of anthranilate, an intermediate in the biosynthesis of L-tryptophan. In the first step, the glutamine-binding beta subunit (TrpG) of anthranilate synthase (AS) provides the glutamine amidotransferase activity which generates ammonia as a substrate that, along with chorismate, is used in the second step, catalyzed by the large alpha subunit of AS (TrpE) to produce anthranilate. In the absence of TrpG, TrpE can synthesize anthranilate directly from chorismate and high concentrations of ammonia. In Vibrio parahaemolyticus serotype O3:K6 (strain RIMD 2210633), this protein is Anthranilate synthase component 1 (trpE).